The primary structure comprises 197 residues: 3-isopropylmalate dehydratase small subunit (197 aa).

The protein belongs to the LeuD family. LeuD type 1 subfamily. Heterodimer of LeuC and LeuD.

It catalyses the reaction (2R,3S)-3-isopropylmalate = (2S)-2-isopropylmalate. The protein operates within amino-acid biosynthesis; L-leucine biosynthesis; L-leucine from 3-methyl-2-oxobutanoate: step 2/4. Functionally, catalyzes the isomerization between 2-isopropylmalate and 3-isopropylmalate, via the formation of 2-isopropylmaleate. The sequence is that of 3-isopropylmalate dehydratase small subunit from Azobacteroides pseudotrichonymphae genomovar. CFP2.